Reading from the N-terminus, the 314-residue chain is MSFASDMKNELTRIEVDEENAKAELSALIRMNGALSLSNQQFVINVQTENATTARRIYSLIKKVFNVEVELLVRKKMKLKKNNIYICRIKARAREILDDLGILKNGVFTHEIDETMIHDDEMRRSYLRGAFLAGGSVNNPETSSYHLEVFSLYEDHSEGITQLMNAYELNAKHLERKKGSIAYLKEAEKISDFLSLIGGYQALLKFEDVRIVRDMRNSVNRLVNCETANLNKTVSAAMKHVESIHLIDKEIGLDNLPDRLREIAKLRIEHQEVSLKELGEMMSTGKISKSGVNHRLRKLNEMADKLRSGEPIEL.

A DNA-binding region (H-T-H motif) is located at residues 274 to 308 (SLKELGEMMSTGKISKSGVNHRLRKLNEMADKLRS).

Belongs to the WhiA family.

Functionally, involved in cell division and chromosome segregation. The polypeptide is Probable cell division protein WhiA (Staphylococcus saprophyticus subsp. saprophyticus (strain ATCC 15305 / DSM 20229 / NCIMB 8711 / NCTC 7292 / S-41)).